We begin with the raw amino-acid sequence, 369 residues long: tRNA pseudouridine synthase D (369 aa).

Residue Asp-80 is the Nucleophile of the active site. The TRUD domain occupies 156–318 (GIPNWFGEQR…LKQERRALRL (163 aa)).

This sequence belongs to the pseudouridine synthase TruD family.

The catalysed reaction is uridine(13) in tRNA = pseudouridine(13) in tRNA. Functionally, responsible for synthesis of pseudouridine from uracil-13 in transfer RNAs. This Xanthomonas euvesicatoria pv. vesicatoria (strain 85-10) (Xanthomonas campestris pv. vesicatoria) protein is tRNA pseudouridine synthase D.